The following is a 163-amino-acid chain: MFSNKKYIGLINKKEGLKKKIDDYSILIIGILIGTNILSLIINIIGEINKPICYQNNDKIFYCPKDWVGYNNVCYYFSNDNGNNYTTADNKCKQLNNSTLANNLTDLLNLTSFLNLTKLYHHHSHYWVNYSLNNNYSVPLIDSKYNLNRKKSHYTDLLFICSK.

Over 1–26 (MFSNKKYIGLINKKEGLKKKIDDYSI) the chain is Cytoplasmic. Residues 27–47 (LIIGILIGTNILSLIINIIGE) traverse the membrane as a helical segment. Residues 48-163 (INKPICYQNN…YTDLLFICSK (116 aa)) lie on the Extracellular side of the membrane. A disulfide bond links Cys63 and Cys74. The interval 63–162 (CPKDWVGYNN…HYTDLLFICS (100 aa)) is lectin-like. Asn84, Asn96, Asn97, Asn103, Asn109, Asn115, Asn129, and Asn135 each carry an N-linked (GlcNAc...) asparagine; by host glycan. A disulfide bond links Cys92 and Cys161.

It belongs to the asfivirus lectin-like protein family. Homodimer.

Its subcellular location is the host endoplasmic reticulum membrane. Functionally, down-regulates MHC-I expression by impairing the appropriate configuration or presentation into the plasma membrane of the latter. Participates in viral hemadsorption, which may help viral spread. Reduces the transactivating activity of host TP53, thus inhibiting apoptosis. Non-essential for virus growth in swine macrophage cell cultures. This is Lectin-like protein EP153R from African swine fever virus (isolate Warthog/Namibia/Wart80/1980) (ASFV).